The sequence spans 61 residues: UPF0434 protein PSPA7_2181 (61 aa).

It belongs to the UPF0434 family.

The chain is UPF0434 protein PSPA7_2181 from Pseudomonas paraeruginosa (strain DSM 24068 / PA7) (Pseudomonas aeruginosa (strain PA7)).